Reading from the N-terminus, the 518-residue chain is 2-isopropylmalate synthase (518 aa).

Residues 4–266 form the Pyruvate carboxyltransferase domain; sequence INFFDTTLRD…ESTIQLNEIK (263 aa). Asp13, His201, His203, and Asn237 together coordinate Mn(2+). A regulatory domain region spans residues 391–518; sequence DFISLQVHYG…GLSKQAAVGS (128 aa).

This sequence belongs to the alpha-IPM synthase/homocitrate synthase family. LeuA type 1 subfamily. In terms of assembly, homodimer. Mn(2+) serves as cofactor.

Its subcellular location is the cytoplasm. It catalyses the reaction 3-methyl-2-oxobutanoate + acetyl-CoA + H2O = (2S)-2-isopropylmalate + CoA + H(+). It participates in amino-acid biosynthesis; L-leucine biosynthesis; L-leucine from 3-methyl-2-oxobutanoate: step 1/4. Its function is as follows. Catalyzes the condensation of the acetyl group of acetyl-CoA with 3-methyl-2-oxobutanoate (2-ketoisovalerate) to form 3-carboxy-3-hydroxy-4-methylpentanoate (2-isopropylmalate). The chain is 2-isopropylmalate synthase from Bacillus licheniformis (strain ATCC 14580 / DSM 13 / JCM 2505 / CCUG 7422 / NBRC 12200 / NCIMB 9375 / NCTC 10341 / NRRL NRS-1264 / Gibson 46).